Consider the following 427-residue polypeptide: Enolase (427 aa).

Gln-163 serves as a coordination point for (2R)-2-phosphoglycerate. Catalysis depends on Glu-205, which acts as the Proton donor. The Mg(2+) site is built by Asp-242, Glu-285, and Asp-312. The (2R)-2-phosphoglycerate site is built by Lys-337, Arg-366, Ser-367, and Lys-388. Lys-337 functions as the Proton acceptor in the catalytic mechanism.

It belongs to the enolase family. Requires Mg(2+) as cofactor.

Its subcellular location is the cytoplasm. It localises to the secreted. It is found in the cell surface. The enzyme catalyses (2R)-2-phosphoglycerate = phosphoenolpyruvate + H2O. The protein operates within carbohydrate degradation; glycolysis; pyruvate from D-glyceraldehyde 3-phosphate: step 4/5. In terms of biological role, catalyzes the reversible conversion of 2-phosphoglycerate (2-PG) into phosphoenolpyruvate (PEP). It is essential for the degradation of carbohydrates via glycolysis. The polypeptide is Enolase (Paraburkholderia phymatum (strain DSM 17167 / CIP 108236 / LMG 21445 / STM815) (Burkholderia phymatum)).